Reading from the N-terminus, the 245-residue chain is Probable transcriptional regulatory protein SUN_1622 (245 aa).

It belongs to the TACO1 family.

Its subcellular location is the cytoplasm. This Sulfurovum sp. (strain NBC37-1) protein is Probable transcriptional regulatory protein SUN_1622.